A 381-amino-acid polypeptide reads, in one-letter code: Alkanesulfonate monooxygenase (381 aa).

It belongs to the SsuD family. In terms of assembly, homotetramer.

The catalysed reaction is an alkanesulfonate + FMNH2 + O2 = an aldehyde + FMN + sulfite + H2O + 2 H(+). Catalyzes the desulfonation of aliphatic sulfonates. The sequence is that of Alkanesulfonate monooxygenase from Shigella flexneri serotype 5b (strain 8401).